We begin with the raw amino-acid sequence, 1162 residues long: MTCQKFYVVLLHWEFLYVITALNLAYPTSPWRFKLFCAPPSTTDDSFLSPAGVPNNTSSLKGASEALVEAKFNSTGIYVSELSKTIFHCCFGNEQGQNCSALTGNTEGKTLASVVKPLVFRQLGVNWDIECWMKGDLTLFICHMEPLLKNPFKNYDSKVHLLYDLPEVIDDLPLPPLKDSFQTVQCNCSVRECECHVPVPRAKVNYALLMYLEITSAGVSFQSPLMSLQPMLVVKPDPPLGLRMEVTDDGNLKISWDSQTKAPFPLQYQVKYLENSTIVREAAEIVSDTSLLVDSVLPGSSYEVQVRSKRLDGSGVWSDWSLPQLFTTQDVMYFPPKILTSVGSNASFCCIYKNENQTISSKQIVWWMNLAEKIPETQYNTVSDHISKVTFSNLKATRPRGKFTYDAVYCCNEQACHHRYAELYVIDVNINISCETDGYLTKMTCRWSPSTIQSLVGSTVQLRYHRRSLYCPDNPSIRPTSELKNCVLQTDGFYECVFQPIFLLSGYTMWIRINHSLGSLDSPPTCVLPDSVVKPLPPSNVKAEITINTGLLKVSWEKPVFPENNLQFQIRYGLNGKEIQWKTHEVFDAKSKSASLPVSDLCAVYVVQVRCRRLDGLGYWSNWSSPAYTLVMDVKVPMRGPEFWRIMDGDITKKERNVTLLWKPLMKNDSLCSVRRYVVKHRTAHNGTWSQDVGNQTNLTFLWAESAHTVTVLAINSIGASLVNFNLTFSWPMSKVNAVQSLSAYPLSSSCVILSWTLSPNDYSLLYLVIEWKNLNDDDGMKWLRIPSNVNKYYIHDNFIPIEKYQFSLYPVFMEGVGKPKIINGFTKDDIAKQQNDAGLYVIVPIIISSCVLLLGTLLISHQRMKKLFWDDVPNPKNCSWAQGLNFQKPETFEHLFTKHAESVIFGPLLLEPEPVSEEISVDTAWKNKDEMVPAAMVSLLLTTPDSTRGSICISDQCNSANFSGAQSTQGTCEDECQSQPSVKYATLVSNVKTVETDEEQGAIHSSVSQCIARKHSPLRQSFSSNSWEIEAQAFFLLSDHPPNVISPQLSFSGLDELLELEGNFPEENHGEKSVYYLGVSSGNKRENDMLLTDEAGVLCPFPAHCLFSDIRILQESCSHFVENNLNLGTSGKNFVPYMPQFQSCSTHSHKIIENKMCDLTV.

The signal sequence occupies residues 1 to 21 (MTCQKFYVVLLHWEFLYVITA). The Extracellular portion of the chain corresponds to 22-839 (LNLAYPTSPW…DIAKQQNDAG (818 aa)). Intrachain disulfides connect Cys37–Cys90, Cys89–Cys99, Cys131–Cys142, Cys186–Cys195, and Cys188–Cys193. N-linked (GlcNAc...) asparagine glycosylation is found at Asn55, Asn56, Asn73, and Asn98. Asn187 carries an N-linked (GlcNAc...) asparagine glycan. The 94-residue stretch at 238–331 (PPLGLRMEVT…LPQLFTTQDV (94 aa)) folds into the Fibronectin type-III 1 domain. 3 N-linked (GlcNAc...) asparagine glycosylation sites follow: Asn275, Asn345, and Asn356. Cystine bridges form between Cys350/Cys410 and Cys411/Cys416. Asn431 carries an N-linked (GlcNAc...) asparagine glycan. 3 cysteine pairs are disulfide-bonded: Cys434–Cys445, Cys471–Cys526, and Cys486–Cys496. Positions 465 to 482 (HRRSLYCPDNPSIRPTSE) are leptin-binding. 8 N-linked (GlcNAc...) asparagine glycosylation sites follow: Asn514, Asn622, Asn657, Asn668, Asn686, Asn695, Asn698, and Asn726. Fibronectin type-III domains follow at residues 537-632 (PPSN…TLVM), 637-729 (PMRG…NLTF), and 738-831 (AVQS…KDDI). A WSXWS motif motif is present at residues 620–624 (WSNWS). The chain crosses the membrane as a helical span at residues 840–860 (LYVIVPIIISSCVLLLGTLLI). Over 861–1162 (SHQRMKKLFW…IENKMCDLTV (302 aa)) the chain is Cytoplasmic. A Box 1 motif motif is present at residues 869–877 (FWDDVPNPK). Ser880 bears the Phosphoserine mark. The segment at 891–896 (ETFEHL) is required for JAK2 activation. A required for STAT3 phosphorylation region spans residues 896-904 (LFTKHAESV). The residue at position 985 (Tyr985) is a Phosphotyrosine; by JAK2. Tyr1077 is modified (phosphotyrosine). Tyr1138 carries the phosphotyrosine; by JAK2 modification.

Belongs to the type I cytokine receptor family. Type 2 subfamily. Present as a mixture of monomers and dimers. The phosphorylated receptor binds a number of SH2 domain-containing proteins such as JAK2, STAT3, PTPN11, and SOCS3. Interaction with SOCS3 inhibits JAK/STAT signaling and MAPK cascade. On ligand binding, phosphorylated on two conserved C-terminal tyrosine residues (isoform B only) by JAK2. Tyr-985 is required for complete binding and activation of PTPN11, ERK/FOS activation,for interaction with SOCS3 and SOCS3 mediated inhibition of leptin signaling. Phosphorylation on Tyr-1138 is required for STAT3 binding/activation. Phosphorylation of Tyr-1077 has a more accessory role. In terms of tissue distribution, isoform B is expressed in kidney, liver, lung, ovary, spleen and uterus. Increased level in uterus during gestation. Isoform A and isoform C are predominantly expressed in cerebral microvessels and choroid plexus, with lower levels in cortex, cerebellum and hypothalamus but also liver and lung. Isoform F is expressed at high levels in brain, liver and spleen and less in stomach, kidney, thymus, heart, lung and hypothalamus.

The protein resides in the cell membrane. Its subcellular location is the basolateral cell membrane. The protein localises to the secreted. Receptor for hormone LEP/leptin. On ligand binding, mediates LEP central and peripheral effects through the activation of different signaling pathways such as JAK2/STAT3 and MAPK cascade/FOS. In the hypothalamus, LEP acts as an appetite-regulating factor that induces a decrease in food intake and an increase in energy consumption by inducing anorexinogenic factors and suppressing orexigenic neuropeptides, also regulates bone mass and secretion of hypothalamo-pituitary-adrenal hormones. In the periphery, increases basal metabolism, influences reproductive function, regulates pancreatic beta-cell function and insulin secretion, is pro-angiogenic and affects innate and adaptive immunity. Control of energy homeostasis and melanocortin production (stimulation of POMC and full repression of AgRP transcription) is mediated by STAT3 signaling, whereas distinct signals regulate NPY and the control of fertility, growth and glucose homeostasis. Involved in the regulation of counter-regulatory response to hypoglycemia by inhibiting neurons of the parabrachial nucleus. Has a specific effect on T lymphocyte responses, differentially regulating the proliferation of naive and memory T-cells. Leptin increases Th1 and suppresses Th2 cytokine production. In terms of biological role, may transport LEP across the blood-brain barrier. Binds LEP and mediates LEP endocytosis. Does not induce phosphorylation of and activate STAT3. Its function is as follows. Antagonizes Isoform A and isoform B-mediated LEP binding and endocytosis. This is Leptin receptor (Lepr) from Rattus norvegicus (Rat).